A 556-amino-acid polypeptide reads, in one-letter code: MKSDIEIAQSVALQPITDIVKKVGIDGDDIELYGKYKAKLSFEKMKAVEANEPGKLLLVTAINPTPAGEGKSTMSIGLADALNQMGKKTMLALREPSLGPVMGIKGGAAGGGYAQVLPMEDINLHFTGDMHAITTANNALSALIDNHLQQGNDLGIDPRRIIWKRVLDLNDRALRQVIVGLGSPVNGVPREDGFDITVASEIMAILCLATDLKDLKKRLADIVVAYTYDRKPVYVRDLKVEGALTLILKDAIKPNLVQTIYGTPALIHGGPFANIAHGCNSVLATSTALRLADYTVTEAGFGADLGAEKFLNIKVPNLPKAPDAIVIVATLRALKMHGGVAKSDLAAENCEAVRLGFANLKRHVENMRQFKVPVVVAINEFVADTEAEIATLKALCEEIKVPVELASVWANGAEGGLALAKTAVRVIDQEAADYKRLYSDEDTLEEKVINIVTQIYGGKAVQFGPKAKTQLKQFAEFGWDKLPVCMAKTQYSFSDNPSLLGAPTDFDITIREFVPKTGAGFIVGLTGDVMTMPGLPKVPAAMAMDVAENGTALGLF.

65 to 72 (TPAGEGKS) provides a ligand contact to ATP.

The protein belongs to the formate--tetrahydrofolate ligase family.

The enzyme catalyses (6S)-5,6,7,8-tetrahydrofolate + formate + ATP = (6R)-10-formyltetrahydrofolate + ADP + phosphate. It participates in one-carbon metabolism; tetrahydrofolate interconversion. This chain is Formate--tetrahydrofolate ligase 1, found in Streptococcus pyogenes serotype M18 (strain MGAS8232).